Reading from the N-terminus, the 321-residue chain is Beta-porphyranase B (321 aa).

The N-terminal stretch at methionine 1–leucine 20 is a signal peptide. The 289-residue stretch at glutamate 31–isoleucine 319 folds into the GH16 domain. Positions 72, 76, 173, 178, and 284 each coordinate substrate. Glutamate 173 serves as the catalytic Nucleophile. Residue glutamate 178 is the Proton donor of the active site.

It belongs to the glycosyl hydrolase 16 family.

The enzyme catalyses Hydrolysis of beta-D-galactopyranose-(1-&gt;4)-alpha-L-galactopyranose-6-sulfate linkages in porphyran.. Cleaves the sulfated polysaccharide porphyran at the (1-&gt;4) linkages between beta-D-galactopyranose and alpha-L-galactopyranose-6-sulfate, forming mostly the disaccharide alpha-L-galactopyranose-6-sulfate-(1-&gt;3)-beta-D-galactose. Some longer oligosaccharides of even number of residues are also observed. Inactive on the non-sulfated agarose portion of the porphyran backbone. In Phocaeicola plebeius (strain DSM 17135 / JCM 12973 / CCUG 54634 / M2) (Bacteroides plebeius), this protein is Beta-porphyranase B.